Consider the following 364-residue polypeptide: DNA replication and repair protein RecF (364 aa).

30 to 37 (GNNAQGKT) contributes to the ATP binding site.

Belongs to the RecF family.

It is found in the cytoplasm. In terms of biological role, the RecF protein is involved in DNA metabolism; it is required for DNA replication and normal SOS inducibility. RecF binds preferentially to single-stranded, linear DNA. It also seems to bind ATP. The chain is DNA replication and repair protein RecF from Clostridium botulinum (strain Loch Maree / Type A3).